The primary structure comprises 444 residues: Tubulin beta chain (444 aa).

Residues glutamine 11, glutamate 68, serine 137, glycine 141, threonine 142, glycine 143, asparagine 203, and asparagine 225 each coordinate GTP. Position 68 (glutamate 68) interacts with Mg(2+). A disordered region spans residues 424–444 (QDATAEEEGEFDEDEEMDEMM). The span at 427–444 (TAEEEGEFDEDEEMDEMM) shows a compositional bias: acidic residues.

The protein belongs to the tubulin family. As to quaternary structure, dimer of alpha and beta chains. A typical microtubule is a hollow water-filled tube with an outer diameter of 25 nm and an inner diameter of 15 nM. Alpha-beta heterodimers associate head-to-tail to form protofilaments running lengthwise along the microtubule wall with the beta-tubulin subunit facing the microtubule plus end conferring a structural polarity. Microtubules usually have 13 protofilaments but different protofilament numbers can be found in some organisms and specialized cells. The cofactor is Mg(2+).

It is found in the cytoplasm. It localises to the cytoskeleton. Functionally, tubulin is the major constituent of microtubules, a cylinder consisting of laterally associated linear protofilaments composed of alpha- and beta-tubulin heterodimers. Microtubules grow by the addition of GTP-tubulin dimers to the microtubule end, where a stabilizing cap forms. Below the cap, tubulin dimers are in GDP-bound state, owing to GTPase activity of alpha-tubulin. This Achlya klebsiana protein is Tubulin beta chain.